We begin with the raw amino-acid sequence, 502 residues long: Serine carboxypeptidase-like 40 (502 aa).

The signal sequence occupies residues 1 to 24; the sequence is MRKGQGYSYSVIASVLVLLCVVVS. N-linked (GlcNAc...) asparagine glycans are attached at residues N103 and N187. Cystine bridges form between C136–C384, C293–C307, and C331–C352. Residue S229 is part of the active site. N-linked (GlcNAc...) asparagine glycosylation is found at N333 and N373. D420 is a catalytic residue. N-linked (GlcNAc...) asparagine glycosylation is present at N436. The active site involves H473.

Belongs to the peptidase S10 family. As to expression, expressed in roots, leaves, flowers and siliques.

The protein resides in the secreted. Probable carboxypeptidase. The protein is Serine carboxypeptidase-like 40 (SCPL40) of Arabidopsis thaliana (Mouse-ear cress).